The chain runs to 136 residues: Large-conductance mechanosensitive channel (136 aa).

The next 2 membrane-spanning stretches (helical) occupy residues Ala-9–Phe-29 and Ile-79–Ile-99.

This sequence belongs to the MscL family. In terms of assembly, homopentamer.

Its subcellular location is the cell inner membrane. Functionally, channel that opens in response to stretch forces in the membrane lipid bilayer. May participate in the regulation of osmotic pressure changes within the cell. The chain is Large-conductance mechanosensitive channel from Shewanella sp. (strain ANA-3).